The following is a 307-amino-acid chain: D-alanine--D-alanine ligase (307 aa).

An ATP-grasp domain is found at 105 to 304 (KMLWKGFGLP…FEQLVVKILE (200 aa)). Position 135 to 190 (135 to 190 (VERLGLPLMVKPSREGSSVGLTKVNAVEELKNAVDLALTHDDTVLIEEWLSGIEMT)) interacts with ATP. 3 residues coordinate Mg(2+): Asp-258, Glu-271, and Asn-273.

The protein belongs to the D-alanine--D-alanine ligase family. Mg(2+) serves as cofactor. The cofactor is Mn(2+).

It is found in the cytoplasm. The catalysed reaction is 2 D-alanine + ATP = D-alanyl-D-alanine + ADP + phosphate + H(+). The protein operates within cell wall biogenesis; peptidoglycan biosynthesis. In terms of biological role, cell wall formation. This is D-alanine--D-alanine ligase from Mannheimia succiniciproducens (strain KCTC 0769BP / MBEL55E).